Here is a 414-residue protein sequence, read N- to C-terminus: MLSAQQFLKEFNNVESLDESLYEIVSQICEEVKLQGDKALKNYNLQFDQVETEKLELEQSQLKNAYDMLDNETRDALEQSYQRIKVYQENIKVKQESSQQTECYERYHPIERVGIYVPGGKASYPSTVLMTATLAQVAGVNEITVVTPPQNSGICQEVLAACYITGVHHVYQVGGAQSIAALTYGTETIKKVDKIVGPGNQYVAYAKKFVFGQVGIDQIAGPTEIALIIDESADLDAIAYDVFAQAEHDEMACTYVISENEKVLNQLNTIIQEKLQYVERQDIISQSIANHHYLILAQDTEEACLIMNTIAPEHASIQTRAPEMYIDKVKYVGALFLGHFSPEVIGDYVAGPSHVLPTNQTARFTNGLSVNDFMTRHSVIHLSQKTFNEVAESAEHIAHIESLFNHEKSIHVRR.

Positions 116, 177, and 200 each coordinate NAD(+). Positions 223, 245, and 248 each coordinate substrate. Zn(2+) is bound by residues Q245 and H248. Active-site proton acceptor residues include E313 and H314. 4 residues coordinate substrate: H314, D347, E401, and H406. Residue D347 participates in Zn(2+) binding. H406 contributes to the Zn(2+) binding site.

The protein belongs to the histidinol dehydrogenase family. It depends on Zn(2+) as a cofactor.

The enzyme catalyses L-histidinol + 2 NAD(+) + H2O = L-histidine + 2 NADH + 3 H(+). The protein operates within amino-acid biosynthesis; L-histidine biosynthesis; L-histidine from 5-phospho-alpha-D-ribose 1-diphosphate: step 9/9. In terms of biological role, catalyzes the sequential NAD-dependent oxidations of L-histidinol to L-histidinaldehyde and then to L-histidine. The polypeptide is Histidinol dehydrogenase (Staphylococcus epidermidis (strain ATCC 35984 / DSM 28319 / BCRC 17069 / CCUG 31568 / BM 3577 / RP62A)).